The chain runs to 372 residues: Spermidine/putrescine import ATP-binding protein PotA (372 aa).

The ABC transporter domain maps to 11 to 241; that stretch reads IELRSIKKSY…PANLFVARFI (231 aa). 43–50 lines the ATP pocket; that stretch reads GPSGCGKT.

Belongs to the ABC transporter superfamily. Spermidine/putrescine importer (TC 3.A.1.11.1) family. In terms of assembly, the complex is composed of two ATP-binding proteins (PotA), two transmembrane proteins (PotB and PotC) and a solute-binding protein (PotD).

The protein localises to the cell inner membrane. The catalysed reaction is ATP + H2O + polyamine-[polyamine-binding protein]Side 1 = ADP + phosphate + polyamineSide 2 + [polyamine-binding protein]Side 1.. In terms of biological role, part of the ABC transporter complex PotABCD involved in spermidine/putrescine import. Responsible for energy coupling to the transport system. This chain is Spermidine/putrescine import ATP-binding protein PotA, found in Haemophilus influenzae (strain 86-028NP).